Here is a 316-residue protein sequence, read N- to C-terminus: N-acetylmuramic acid 6-phosphate etherase (316 aa).

Residues 68–231 (ITDRLRSGGR…STCAMVRLGK (164 aa)) enclose the SIS domain. Residue Glu96 is the Proton donor of the active site. Glu127 is a catalytic residue.

It belongs to the GCKR-like family. MurNAc-6-P etherase subfamily. Homodimer.

The catalysed reaction is N-acetyl-D-muramate 6-phosphate + H2O = N-acetyl-D-glucosamine 6-phosphate + (R)-lactate. Its pathway is amino-sugar metabolism; N-acetylmuramate degradation. Functionally, specifically catalyzes the cleavage of the D-lactyl ether substituent of MurNAc 6-phosphate, producing GlcNAc 6-phosphate and D-lactate. The sequence is that of N-acetylmuramic acid 6-phosphate etherase from Prochlorococcus marinus (strain MIT 9303).